The chain runs to 165 residues: Cytochrome c-type biogenesis protein CcmE (165 aa).

Residues Met-1–Arg-29 lie on the Cytoplasmic side of the membrane. Residues Leu-30–Ala-50 form a helical; Signal-anchor for type II membrane protein membrane-spanning segment. The Periplasmic portion of the chain corresponds to Phe-51–Lys-165. Residues His-143 and Tyr-147 each coordinate heme.

This sequence belongs to the CcmE/CycJ family.

The protein localises to the cell inner membrane. In terms of biological role, heme chaperone required for the biogenesis of c-type cytochromes. Transiently binds heme delivered by CcmC and transfers the heme to apo-cytochromes in a process facilitated by CcmF and CcmH. The polypeptide is Cytochrome c-type biogenesis protein CcmE (Brucella canis (strain ATCC 23365 / NCTC 10854 / RM-666)).